We begin with the raw amino-acid sequence, 237 residues long: MAAMVTKSAVQWPLPEARVPLPLILNAVGECAVEIACLDLEGVLVPEIWIAFAEKTGIESLRATTRDIPDYDVLMKQRLRILDEHGLKLADIQAVISTLKPLEGAVEFVDWLRERFQVVILSDTFYEFSQPLMRQLGFPTLLCHRLITDETDRVVSYQLRQKDPKRQSVLAFKSLYYRIIAAGDSYNDTTMLGEADAGILFHAPDNVIREFPQFPAVHTFDELKKEFIKASNRELVL.

Catalysis depends on D39, which acts as the Nucleophile. 2 residues coordinate Mg(2+): D39 and E41. Catalysis depends on E41, which acts as the Proton donor. Substrate is bound by residues E47, R78, 122-123 (SD), and K165. Residue D184 participates in Mg(2+) binding. N187 lines the substrate pocket.

This sequence belongs to the thrH family. Mg(2+) serves as cofactor.

The enzyme catalyses O-phospho-L-serine + H2O = L-serine + phosphate. It catalyses the reaction O-phospho-D-serine + H2O = D-serine + phosphate. Its pathway is amino-acid biosynthesis; L-serine biosynthesis; L-serine from 3-phospho-D-glycerate: step 3/3. Phosphoserine phosphatase that mediates dephosphorylation of phosphoserine in the serine biosynthesis pathway. Also able to dephosphorylate phospho-threonine. This is Phosphoserine phosphatase from Pseudomonas syringae pv. tomato (strain ATCC BAA-871 / DC3000).